A 123-amino-acid chain; its full sequence is Small ribosomal subunit protein uS12 (123 aa).

Residue D89 is modified to 3-methylthioaspartic acid.

Belongs to the universal ribosomal protein uS12 family. Part of the 30S ribosomal subunit. Contacts proteins S8 and S17. May interact with IF1 in the 30S initiation complex.

Functionally, with S4 and S5 plays an important role in translational accuracy. Its function is as follows. Interacts with and stabilizes bases of the 16S rRNA that are involved in tRNA selection in the A site and with the mRNA backbone. Located at the interface of the 30S and 50S subunits, it traverses the body of the 30S subunit contacting proteins on the other side and probably holding the rRNA structure together. The combined cluster of proteins S8, S12 and S17 appears to hold together the shoulder and platform of the 30S subunit. The chain is Small ribosomal subunit protein uS12 from Chelativorans sp. (strain BNC1).